A 288-amino-acid polypeptide reads, in one-letter code: MITTATRWPSPAKLNLFLYINGQHDNGYHELQTLFQFIDLCDHLTITPNDSGEITLSPPIPGVEKKDNLIWKAATQLQEHTLCPLGAHIELEKILPIGGGIGGGSSNAATTLVALNFLWDLNLTNKELADLGVTLGADVPIFVHGFSAFAEGIGEKLQPANPKELWYVLIKPEVSIATVDVFSHPELIRNTAKQPLNVLLSASYENDCEKIVRRVYPEVDYQLSWLLEYAPSRLTGTGACVFAEFINEKEAQHVFSLIPDNATGFITRGRNTSPLNQALEEYKSLCNI.

Lysine 13 is an active-site residue. 96 to 106 (PIGGGIGGGSS) lines the ATP pocket. Aspartate 138 is an active-site residue.

It belongs to the GHMP kinase family. IspE subfamily.

The catalysed reaction is 4-CDP-2-C-methyl-D-erythritol + ATP = 4-CDP-2-C-methyl-D-erythritol 2-phosphate + ADP + H(+). The protein operates within isoprenoid biosynthesis; isopentenyl diphosphate biosynthesis via DXP pathway; isopentenyl diphosphate from 1-deoxy-D-xylulose 5-phosphate: step 3/6. In terms of biological role, catalyzes the phosphorylation of the position 2 hydroxy group of 4-diphosphocytidyl-2C-methyl-D-erythritol. The polypeptide is 4-diphosphocytidyl-2-C-methyl-D-erythritol kinase (Aliivibrio salmonicida (strain LFI1238) (Vibrio salmonicida (strain LFI1238))).